Reading from the N-terminus, the 122-residue chain is Large ribosomal subunit protein uL14 (122 aa).

The protein belongs to the universal ribosomal protein uL14 family. Part of the 50S ribosomal subunit. Forms a cluster with proteins L3 and L19. In the 70S ribosome, L14 and L19 interact and together make contacts with the 16S rRNA in bridges B5 and B8.

Its function is as follows. Binds to 23S rRNA. Forms part of two intersubunit bridges in the 70S ribosome. In Geobacillus sp. (strain WCH70), this protein is Large ribosomal subunit protein uL14.